We begin with the raw amino-acid sequence, 111 residues long: WAP four-disulfide core domain protein 12 (111 aa).

The N-terminal stretch at 1–23 (MGSSSFLVLMVSLTLVTLVAAEG) is a signal peptide. A WAP domain is found at 27–74 (GIEKAGVCPADNVRCFKSDPPQCHTDQDCLGERKCCYLHCGFKCVIPV). Disulfide bonds link Cys34/Cys62, Cys41/Cys66, Cys49/Cys61, and Cys55/Cys70. The segment at 80-111 (GGNKDEDVSGPCPEPGWEAKSPGSSSTGCPQK) is disordered. The span at 101–111 (PGSSSTGCPQK) shows a compositional bias: polar residues.

It is found in the secreted. Its function is as follows. Antibacterial protein. Putative acid-stable proteinase inhibitor. This is WAP four-disulfide core domain protein 12 (WFDC12) from Chlorocebus aethiops (Green monkey).